A 463-amino-acid chain; its full sequence is Interferon-inducible GTPase 5 (463 aa).

Residues 52–234 form the IRG-type G domain; it reads TRLEVGVTGE…PMLVTTWEHD (183 aa). GTP-binding positions include 61–68, 86–90, 168–170, and 215–217; these read ESGAGKSS, TGVVE, KVD, and SNL. A phosphoserine mark is found at S246 and S303. A disordered region spans residues 409–438; sequence QGEVSLEAAGDNAVEKRSSGEGTSEEAPLS.

Belongs to the TRAFAC class dynamin-like GTPase superfamily. IRG family.

It is found in the cell projection. The protein localises to the cilium. It localises to the flagellum. Its subcellular location is the lipid droplet. It carries out the reaction GTP + H2O = GDP + phosphate + H(+). In terms of biological role, required for sperm motility and therefore male fertility, via positive regulation of spermatozoa fibrous sheath formation. The polypeptide is Interferon-inducible GTPase 5 (Irgc) (Rattus norvegicus (Rat)).